A 308-amino-acid polypeptide reads, in one-letter code: Serine/threonine-protein phosphatase 4 catalytic subunit (308 aa).

Residues Asp51, His53, Asp79, and Asn111 each contribute to the Mn(2+) site. Residue His112 is the Proton donor of the active site. Mn(2+) contacts are provided by His161 and His235. Position 308 is a leucine methyl ester (Leu308).

This sequence belongs to the PPP phosphatase family. PP-4 (PP-X) subfamily. In terms of assembly, catalytic subunit of the histone H2A phosphatase complex (HTP-C) containing PPH3, PSY2 and PSY4. The cofactor is Mn(2+).

The protein localises to the cytoplasm. Its subcellular location is the nucleus. It catalyses the reaction O-phospho-L-seryl-[protein] + H2O = L-seryl-[protein] + phosphate. It carries out the reaction O-phospho-L-threonyl-[protein] + H2O = L-threonyl-[protein] + phosphate. Functionally, forms the histone H2A phosphatase complex in association with the regulatory subunits PSY2 and PSY4, which dephosphorylates H2AS128ph (gamma-H2A) that has been displaced from sites of DNA lesions in the double-stranded DNA break repair process. Dephosphorylation is necessary for efficient recovery from the DNA damage checkpoint. This is Serine/threonine-protein phosphatase 4 catalytic subunit (PPH3) from Kluyveromyces lactis (strain ATCC 8585 / CBS 2359 / DSM 70799 / NBRC 1267 / NRRL Y-1140 / WM37) (Yeast).